The sequence spans 370 residues: DNA replication and repair protein RecF (370 aa).

An ATP-binding site is contributed by 30–37 (GQNGMGKT).

This sequence belongs to the RecF family.

The protein localises to the cytoplasm. In terms of biological role, the RecF protein is involved in DNA metabolism; it is required for DNA replication and normal SOS inducibility. RecF binds preferentially to single-stranded, linear DNA. It also seems to bind ATP. The sequence is that of DNA replication and repair protein RecF from Bacteroides fragilis (strain YCH46).